A 166-amino-acid chain; its full sequence is SUMO-conjugating enzyme UBC9 (166 aa).

Residues 4–157 (IAAGRLAEER…VKKEAVKYAA (154 aa)) form the UBC core domain. The active-site Glycyl thioester intermediate is the Cys93.

This sequence belongs to the ubiquitin-conjugating enzyme family. Interacts with brd-1 and rad-51. Interacts with smo-1 and sop-2. Interacts with bet-1 (via BROMO domain 2). Interacts with isoforms 1 and 2 of X-box-binding protein xbp-1.

It localises to the nucleus envelope. Its pathway is protein modification; protein sumoylation. Accepts the ubiquitin-like protein smo-1 from the aos-1-uba-2 E1 complex and catalyzes its covalent attachment to other proteins with the help of an E3 ligase such as gei-17. Required to sumoylate the ETS transcription factor lin-1, Polycomb protein sop-2, and intermediate filament proteins, such as ifb-1. Required for embryonic development, fertility, vulval morphogenesis, inhibition of vulval cell fates, lifespan, and neuromuscular activity. This Caenorhabditis elegans protein is SUMO-conjugating enzyme UBC9.